The chain runs to 626 residues: Chaperone protein HtpG (626 aa).

An a; substrate-binding region spans residues 1–331; it reads MSETVERHEF…TDDLPLNVSR (331 aa). Positions 332 to 544 are b; it reads EMLQSTPTLQ…GMGPDLQMQR (213 aa). Residues 545–626 form a c region; sequence LLRRAGRGFG…GTVAKPAESA (82 aa).

Belongs to the heat shock protein 90 family. In terms of assembly, homodimer.

It is found in the cytoplasm. In terms of biological role, molecular chaperone. Has ATPase activity. The sequence is that of Chaperone protein HtpG from Methylorubrum populi (strain ATCC BAA-705 / NCIMB 13946 / BJ001) (Methylobacterium populi).